The chain runs to 92 residues: Small ribosomal subunit protein bS20 (92 aa).

Residues 1 to 21 (MPLHKSAEKRLRQAARRNERN) are compositionally biased toward basic and acidic residues. Disordered regions lie at residues 1–26 (MPLH…ARKK) and 73–92 (ASRK…PTAS). Residues 82–92 (KALNNYTPTAS) show a composition bias toward polar residues.

Belongs to the bacterial ribosomal protein bS20 family.

In terms of biological role, binds directly to 16S ribosomal RNA. This chain is Small ribosomal subunit protein bS20, found in Chlorobaculum tepidum (strain ATCC 49652 / DSM 12025 / NBRC 103806 / TLS) (Chlorobium tepidum).